Reading from the N-terminus, the 244-residue chain is Protein crossbronx (244 aa).

In terms of domain architecture, UBC core spans 20–176 (QQEYKILAEY…VQKNIKESKE (157 aa)). A disordered region spans residues 209–244 (AGRSKQTEPSAQQANGGHATGLSWVKEGEFKPLSIE).

It belongs to the ubiquitin-conjugating enzyme family. FTS subfamily.

This is Protein crossbronx (cbx) from Drosophila erecta (Fruit fly).